Consider the following 228-residue polypeptide: MLRKAFLLNLGMLDYNRSRDLQKRLHARRVIDVVPDTVLLVEHPHTITLGRRGNRLCLKASPEDLERMGIPVVQVERGGDVTYHGPGQAVVYPILHLRESGLSLADYVSALESLVIGVLGDFGIKGRRNGKNRGVWVGGDKIASVGIAVSRWVSYHGIALNCTTNLEYFGLIDACGLKGVEMTSISRLLGKDVSGSEVHRSIAFHLRRLFERDWQERTLPEIEALLND.

The BPL/LPL catalytic domain occupies 32–214 (DVVPDTVLLV…HLRRLFERDW (183 aa)). Substrate contacts are provided by residues 77–84 (RGGDVTYH), 144–146 (SVG), and 157–159 (GIA). The Acyl-thioester intermediate role is filled by cysteine 175.

Belongs to the LipB family.

The protein resides in the cytoplasm. The enzyme catalyses octanoyl-[ACP] + L-lysyl-[protein] = N(6)-octanoyl-L-lysyl-[protein] + holo-[ACP] + H(+). The protein operates within protein modification; protein lipoylation via endogenous pathway; protein N(6)-(lipoyl)lysine from octanoyl-[acyl-carrier-protein]: step 1/2. Functionally, catalyzes the transfer of endogenously produced octanoic acid from octanoyl-acyl-carrier-protein onto the lipoyl domains of lipoate-dependent enzymes. Lipoyl-ACP can also act as a substrate although octanoyl-ACP is likely to be the physiological substrate. This Syntrophobacter fumaroxidans (strain DSM 10017 / MPOB) protein is Octanoyltransferase.